Consider the following 235-residue polypeptide: Elongation factor Tu, chloroplastic (235 aa).

Residues 1–125 (KNMITGAAQM…EVDNYIPLPT (125 aa)) enclose the tr-type G domain. 47–50 (NKAD) contacts GTP.

Belongs to the TRAFAC class translation factor GTPase superfamily. Classic translation factor GTPase family. EF-Tu/EF-1A subfamily.

It is found in the plastid. The protein localises to the chloroplast. It carries out the reaction GTP + H2O = GDP + phosphate + H(+). In terms of biological role, GTP hydrolase that promotes the GTP-dependent binding of aminoacyl-tRNA to the A-site of ribosomes during protein biosynthesis. This chain is Elongation factor Tu, chloroplastic (tufA), found in Bryopsis plumosa (Green alga).